The chain runs to 590 residues: Transcription factor bHLH13 (590 aa).

Disordered regions lie at residues 274 to 296 and 385 to 439; these read LQHHQHHQQQQQQPPQQQQHRQF and AASS…EAER. Residues 281-293 show a composition bias toward low complexity; sequence QQQQQQPPQQQQH. The segment covering 416 to 425 has biased composition (basic residues); it reads RPRKRGRRPA. The bHLH domain occupies 429–478; it reads AEALNHVEAERQRREKLNQRFYALRSVVPNISKMDKASLLGDAVSYINEL.

Homodimer.

The protein localises to the nucleus. In Arabidopsis thaliana (Mouse-ear cress), this protein is Transcription factor bHLH13 (BHLH13).